The sequence spans 173 residues: MADSSAAEPTTGASSPPVASDENSTQIQPIRMPTIEEIRAQEVWNNCAVRAVTSGVMGGGLGLMMGLFLGALDNPITHDTMTARQQFVFTAKQMGQRSWNSCKTFAVMGLVFSAAECIVEKARAKHDTVNTAIAGCVTGGSMSARGGPKAACIGCAGFATFSVLIEKFFDRHT.

The N-terminal 18 residues, M1–V18, are a transit peptide targeting the mitochondrion. A disordered region spans residues M1 to Q26. Transmembrane regions (helical) follow at residues V52–L72, S101–V119, T128–A144, and A151–F168.

It belongs to the Tim17/Tim22/Tim23 family. As to expression, expressed in young cotyledons, roots, flowers and leaves.

Its subcellular location is the mitochondrion inner membrane. Functionally, essential core component of the TIM22 complex, a complex that mediates the import and insertion of multi-pass transmembrane proteins into the mitochondrial inner membrane. This chain is Mitochondrial import inner membrane translocase subunit TIM22-1 (TIM22-1), found in Arabidopsis thaliana (Mouse-ear cress).